Here is a 555-residue protein sequence, read N- to C-terminus: Methionine--tRNA ligase (555 aa).

The 'HIGH' region signature appears at 13–23 (PYANGSLHIGH). The Zn(2+) site is built by C144, C147, C157, and C160. Positions 330-334 (KISKS) match the 'KMSKS' region motif. K333 provides a ligand contact to ATP.

It belongs to the class-I aminoacyl-tRNA synthetase family. MetG type 1 subfamily. Monomer. It depends on Zn(2+) as a cofactor.

The protein resides in the cytoplasm. The enzyme catalyses tRNA(Met) + L-methionine + ATP = L-methionyl-tRNA(Met) + AMP + diphosphate. Is required not only for elongation of protein synthesis but also for the initiation of all mRNA translation through initiator tRNA(fMet) aminoacylation. The polypeptide is Methionine--tRNA ligase (Blochmanniella pennsylvanica (strain BPEN)).